The following is a 235-amino-acid chain: Ubiquinone biosynthesis O-methyltransferase (235 aa).

The S-adenosyl-L-methionine site is built by R39, G59, D80, and M124.

It belongs to the methyltransferase superfamily. UbiG/COQ3 family.

The enzyme catalyses a 3-demethylubiquinol + S-adenosyl-L-methionine = a ubiquinol + S-adenosyl-L-homocysteine + H(+). The catalysed reaction is a 3-(all-trans-polyprenyl)benzene-1,2-diol + S-adenosyl-L-methionine = a 2-methoxy-6-(all-trans-polyprenyl)phenol + S-adenosyl-L-homocysteine + H(+). It functions in the pathway cofactor biosynthesis; ubiquinone biosynthesis. In terms of biological role, O-methyltransferase that catalyzes the 2 O-methylation steps in the ubiquinone biosynthetic pathway. This chain is Ubiquinone biosynthesis O-methyltransferase, found in Vibrio campbellii (strain ATCC BAA-1116).